We begin with the raw amino-acid sequence, 60 residues long: Cytochrome c oxidase subunit 9, mitochondrial (60 aa).

Over Met-1–Ile-15 the chain is Mitochondrial matrix. The chain crosses the membrane as a helical span at residues Leu-16–His-38. The Mitochondrial intermembrane segment spans residues Lys-39–Ala-57. A propeptide spans Ala-58–Asn-60 (removed in mature form).

The protein belongs to the fungal cytochrome c oxidase subunit 7a family. Component of the cytochrome c oxidase (complex IV, CIV), a multisubunit enzyme composed of a catalytic core of 3 subunits and several supernumerary subunits. The complex exists as a monomer or a dimer and forms supercomplexes (SCs) in the inner mitochondrial membrane with ubiquinol-cytochrome c oxidoreductase (cytochrome b-c1 complex, complex III, CIII).

The protein localises to the mitochondrion inner membrane. The protein operates within energy metabolism; oxidative phosphorylation. Functionally, component of the cytochrome c oxidase, the last enzyme in the mitochondrial electron transport chain which drives oxidative phosphorylation. The respiratory chain contains 3 multisubunit complexes succinate dehydrogenase (complex II, CII), ubiquinol-cytochrome c oxidoreductase (cytochrome b-c1 complex, complex III, CIII) and cytochrome c oxidase (complex IV, CIV), that cooperate to transfer electrons derived from NADH and succinate to molecular oxygen, creating an electrochemical gradient over the inner membrane that drives transmembrane transport and the ATP synthase. Cytochrome c oxidase is the component of the respiratory chain that catalyzes the reduction of oxygen to water. Electrons originating from reduced cytochrome c in the intermembrane space (IMS) are transferred via the dinuclear copper A center (CU(A)) of subunit 2 and heme A of subunit 1 to the active site in subunit 1, a binuclear center (BNC) formed by heme A3 and copper B (CU(B)). The BNC reduces molecular oxygen to 2 water molecules using 4 electrons from cytochrome c in the IMS and 4 protons from the mitochondrial matrix. The polypeptide is Cytochrome c oxidase subunit 9, mitochondrial (COX9) (Kluyveromyces lactis (strain ATCC 8585 / CBS 2359 / DSM 70799 / NBRC 1267 / NRRL Y-1140 / WM37) (Yeast)).